We begin with the raw amino-acid sequence, 316 residues long: Putative transketolase C-terminal section (316 aa).

It belongs to the transketolase family. The cofactor is thiamine diphosphate.

The catalysed reaction is D-sedoheptulose 7-phosphate + D-glyceraldehyde 3-phosphate = aldehydo-D-ribose 5-phosphate + D-xylulose 5-phosphate. The protein is Putative transketolase C-terminal section of Methanocaldococcus jannaschii (strain ATCC 43067 / DSM 2661 / JAL-1 / JCM 10045 / NBRC 100440) (Methanococcus jannaschii).